Here is a 215-residue protein sequence, read N- to C-terminus: Cytochrome b6 (215 aa).

A helical membrane pass occupies residues 32–52; sequence IFYCLGGITLTCFLVQVATGF. Cys-35 contacts heme c. Heme b contacts are provided by His-86 and His-100. The next 3 membrane-spanning stretches (helical) occupy residues 90–110, 116–136, and 186–206; these read ASMM…TGGF, LTWV…VTGY, and LHTF…FPMI. Heme b contacts are provided by His-187 and His-202.

Belongs to the cytochrome b family. PetB subfamily. The 4 large subunits of the cytochrome b6-f complex are cytochrome b6, subunit IV (17 kDa polypeptide, PetD), cytochrome f and the Rieske protein, while the 4 small subunits are PetG, PetL, PetM and PetN. The complex functions as a dimer. Requires heme b as cofactor. It depends on heme c as a cofactor.

It localises to the plastid. The protein resides in the chloroplast thylakoid membrane. Functionally, component of the cytochrome b6-f complex, which mediates electron transfer between photosystem II (PSII) and photosystem I (PSI), cyclic electron flow around PSI, and state transitions. The sequence is that of Cytochrome b6 from Jasminum nudiflorum (Winter jasmine).